The sequence spans 502 residues: ATP synthase subunit alpha (502 aa).

G169–T176 is an ATP binding site.

This sequence belongs to the ATPase alpha/beta chains family. As to quaternary structure, F-type ATPases have 2 components, CF(1) - the catalytic core - and CF(0) - the membrane proton channel. CF(1) has five subunits: alpha(3), beta(3), gamma(1), delta(1), epsilon(1). CF(0) has three main subunits: a(1), b(2) and c(9-12). The alpha and beta chains form an alternating ring which encloses part of the gamma chain. CF(1) is attached to CF(0) by a central stalk formed by the gamma and epsilon chains, while a peripheral stalk is formed by the delta and b chains.

The protein localises to the cell membrane. The enzyme catalyses ATP + H2O + 4 H(+)(in) = ADP + phosphate + 5 H(+)(out). Functionally, produces ATP from ADP in the presence of a proton gradient across the membrane. The alpha chain is a regulatory subunit. This is ATP synthase subunit alpha from Desulfitobacterium hafniense (strain DSM 10664 / DCB-2).